Here is a 94-residue protein sequence, read N- to C-terminus: Integration host factor subunit beta (94 aa).

It belongs to the bacterial histone-like protein family. As to quaternary structure, heterodimer of an alpha and a beta chain.

In terms of biological role, this protein is one of the two subunits of integration host factor, a specific DNA-binding protein that functions in genetic recombination as well as in transcriptional and translational control. The protein is Integration host factor subunit beta of Mesorhizobium japonicum (strain LMG 29417 / CECT 9101 / MAFF 303099) (Mesorhizobium loti (strain MAFF 303099)).